The sequence spans 415 residues: Carboxypeptidase G2 (415 aa).

Positions 1–22 (MRPSIHRTAIAAVLATAFVAGT) are cleaved as a signal peptide. Zn(2+) is bound at residue His-112. Residue Asp-114 is part of the active site. Asp-141 is a Zn(2+) binding site. Catalysis depends on Glu-175, which acts as the Proton acceptor. 3 residues coordinate Zn(2+): Glu-176, Glu-200, and His-385.

The protein belongs to the peptidase M20A family. As to quaternary structure, homodimer. Requires Zn(2+) as cofactor.

The catalysed reaction is Release of C-terminal glutamate residues from a wide range of N-acylating moieties, including peptidyl, aminoacyl, benzoyl, benzyloxycarbonyl, folyl and pteroyl groups.. Catalyzes the hydrolysis of reduced and non-reduced folates to pteroates and L-glutamate. This enzyme has a broad specificity. The polypeptide is Carboxypeptidase G2 (cpg2) (Pseudomonas sp. (strain RS-16)).